Consider the following 887-residue polypeptide: DNA mismatch repair protein MutS (887 aa).

602–609 (GPNMSGKS) serves as a coordination point for ATP.

Belongs to the DNA mismatch repair MutS family.

Its function is as follows. This protein is involved in the repair of mismatches in DNA. It is possible that it carries out the mismatch recognition step. This protein has a weak ATPase activity. This is DNA mismatch repair protein MutS from Staphylococcus saprophyticus subsp. saprophyticus (strain ATCC 15305 / DSM 20229 / NCIMB 8711 / NCTC 7292 / S-41).